We begin with the raw amino-acid sequence, 451 residues long: Signal recognition particle 54 kDa protein (451 aa).

GTP-binding positions include 105-112, 187-191, and 247-250; these read GVQGTGKT, DTAGR, and TKMD.

Belongs to the GTP-binding SRP family. SRP54 subfamily. As to quaternary structure, part of the signal recognition particle protein translocation system, which is composed of SRP and FtsY. Archaeal SRP consists of a 7S RNA molecule of 300 nucleotides and two protein subunits: SRP54 and SRP19.

It localises to the cytoplasm. The catalysed reaction is GTP + H2O = GDP + phosphate + H(+). Involved in targeting and insertion of nascent membrane proteins into the cytoplasmic membrane. Binds to the hydrophobic signal sequence of the ribosome-nascent chain (RNC) as it emerges from the ribosomes. The SRP-RNC complex is then targeted to the cytoplasmic membrane where it interacts with the SRP receptor FtsY. In Acidianus ambivalens (Desulfurolobus ambivalens), this protein is Signal recognition particle 54 kDa protein.